A 226-amino-acid chain; its full sequence is Regulator of microtubule dynamics protein 1 (226 aa).

Belongs to the FAM82/RMD family. Interacts with air-2.

The protein localises to the cytoplasm. It is found in the cytoskeleton. The protein resides in the spindle pole. Acts in chromosome segregation and organization during mitosis. This chain is Regulator of microtubule dynamics protein 1 (rmd-1), found in Caenorhabditis elegans.